Reading from the N-terminus, the 359-residue chain is tRNA/tmRNA (uracil-C(5))-methyltransferase (359 aa).

Gln-183, Tyr-211, Asn-216, Glu-232, and Asp-292 together coordinate S-adenosyl-L-methionine. Cys-317 acts as the Nucleophile in catalysis. The active-site Proton acceptor is Glu-351.

This sequence belongs to the class I-like SAM-binding methyltransferase superfamily. RNA M5U methyltransferase family. TrmA subfamily.

It catalyses the reaction uridine(54) in tRNA + S-adenosyl-L-methionine = 5-methyluridine(54) in tRNA + S-adenosyl-L-homocysteine + H(+). The catalysed reaction is uridine(341) in tmRNA + S-adenosyl-L-methionine = 5-methyluridine(341) in tmRNA + S-adenosyl-L-homocysteine + H(+). Its function is as follows. Dual-specificity methyltransferase that catalyzes the formation of 5-methyluridine at position 54 (m5U54) in all tRNAs, and that of position 341 (m5U341) in tmRNA (transfer-mRNA). The polypeptide is tRNA/tmRNA (uracil-C(5))-methyltransferase (Pseudomonas fluorescens (strain SBW25)).